We begin with the raw amino-acid sequence, 215 residues long: Cytochrome b6 (215 aa).

Residues 32–52 form a helical membrane-spanning segment; it reads IFYCLGGITLTCFLVQVATGF. Residue Cys35 coordinates heme c. Heme b-binding residues include His86 and His100. 3 helical membrane passes run 90–110, 116–136, and 186–206; these read ASMM…TGGF, LTWV…VTGY, and LHTF…FPMI. Residues His187 and His202 each contribute to the heme b site.

It belongs to the cytochrome b family. PetB subfamily. In terms of assembly, the 4 large subunits of the cytochrome b6-f complex are cytochrome b6, subunit IV (17 kDa polypeptide, PetD), cytochrome f and the Rieske protein, while the 4 small subunits are PetG, PetL, PetM and PetN. The complex functions as a dimer. Heme b serves as cofactor. The cofactor is heme c.

The protein localises to the plastid. The protein resides in the chloroplast thylakoid membrane. Functionally, component of the cytochrome b6-f complex, which mediates electron transfer between photosystem II (PSII) and photosystem I (PSI), cyclic electron flow around PSI, and state transitions. The sequence is that of Cytochrome b6 from Phalaenopsis aphrodite subsp. formosana (Moth orchid).